A 101-amino-acid chain; its full sequence is Protein S100-A3 (101 aa).

N-acetylalanine is present on Ala2. EF-hand domains are found at residues 12-47 and 50-85; these read IVCTFQEYAGRCGDKYKLCQAELKELLQKELATWTP and FRECDYNKFMSVLDTNKDCEVDFVEYVRSLACLCLY. Ca(2+) is bound by residues Lys28 and Glu33. An intrachain disulfide couples Cys30 to Cys68. Arg51 carries the post-translational modification Citrulline; by PAD3. The Ca(2+) site is built by Asp63, Asn65, Asp67, Glu69, and Glu74. An intrachain disulfide couples Cys81 to Cys99. Cys83, Cys86, His87, and Cys93 together coordinate Zn(2+).

It belongs to the S-100 family. Homodimer and homotetramer for the citrullinated form. More than half of the arginine residues undergo citrullination by PAD1 and PAD2. Arg-51 is specifically citrullinated by PAD3 and promotes tetramerization. As to expression, skin specific, specifically expressed at the inner endocuticle of hair fibers.

It is found in the cytoplasm. Functionally, binds both calcium and zinc. May be involved in calcium-dependent cuticle cell differentiation, hair shaft and hair cuticular barrier formation. The chain is Protein S100-A3 (S100A3) from Homo sapiens (Human).